Reading from the N-terminus, the 255-residue chain is tRNA-cytidine(32) 2-sulfurtransferase (255 aa).

Residues 37–42 carry the PP-loop motif motif; it reads SGGKDS. Positions 112, 115, and 202 each coordinate [4Fe-4S] cluster.

This sequence belongs to the TtcA family. Homodimer. Mg(2+) is required as a cofactor. The cofactor is [4Fe-4S] cluster.

It localises to the cytoplasm. It catalyses the reaction cytidine(32) in tRNA + S-sulfanyl-L-cysteinyl-[cysteine desulfurase] + AH2 + ATP = 2-thiocytidine(32) in tRNA + L-cysteinyl-[cysteine desulfurase] + A + AMP + diphosphate + H(+). Its pathway is tRNA modification. Functionally, catalyzes the ATP-dependent 2-thiolation of cytidine in position 32 of tRNA, to form 2-thiocytidine (s(2)C32). The sulfur atoms are provided by the cysteine/cysteine desulfurase (IscS) system. The polypeptide is tRNA-cytidine(32) 2-sulfurtransferase (Citrifermentans bemidjiense (strain ATCC BAA-1014 / DSM 16622 / JCM 12645 / Bem) (Geobacter bemidjiensis)).